The sequence spans 216 residues: Probable transaldolase (216 aa).

K83 acts as the Schiff-base intermediate with substrate in catalysis.

Belongs to the transaldolase family. Type 3B subfamily.

Its subcellular location is the cytoplasm. It catalyses the reaction D-sedoheptulose 7-phosphate + D-glyceraldehyde 3-phosphate = D-erythrose 4-phosphate + beta-D-fructose 6-phosphate. It functions in the pathway carbohydrate degradation; pentose phosphate pathway; D-glyceraldehyde 3-phosphate and beta-D-fructose 6-phosphate from D-ribose 5-phosphate and D-xylulose 5-phosphate (non-oxidative stage): step 2/3. Its function is as follows. Transaldolase is important for the balance of metabolites in the pentose-phosphate pathway. This chain is Probable transaldolase, found in Clostridioides difficile (strain 630) (Peptoclostridium difficile).